A 399-amino-acid chain; its full sequence is Keratin, type I cytoskeletal 19 (399 aa).

Residues 1–78 form a head region; the sequence is MTSYSYRQSS…ATSDGLLAGN (78 aa). Position 7 is an omega-N-methylarginine (Arg7). Ser14 and Ser22 each carry phosphoserine. The residue at position 24 (Arg24) is an Asymmetric dimethylarginine; alternate. Position 24 is an omega-N-methylarginine; alternate (Arg24). Arg32 is subject to Omega-N-methylarginine. 2 positions are modified to phosphoserine: Ser35 and Ser40. Omega-N-methylarginine is present on residues Arg43 and Arg51. Phosphoserine is present on residues Ser57 and Ser71. Residues 79-114 are coil 1A; sequence EKLTMQNLNDRLASYLEKVRALEEANGDLEVKIRDW. The IF rod domain maps to 79–390; sequence EKLTMQNLND…NLLEGQDAYF (312 aa). Positions 115–132 are linker 1; it reads YQKQGPGPARDYSHYFKT. Residues 133–224 are coil 1B; it reads IEDLRDQILG…KNHEEEMSVL (92 aa). A linker 12 region spans residues 225–247; it reads KGQVGGQVSVEVDSAPGIDLAKI. The segment at 243-389 is necessary for interaction with PNN; sequence DLAKILSDMR…RNLLEGQDAY (147 aa). Residues 248 to 386 are coil 2; the sequence is LSDMRSQYEV…ATYRNLLEGQ (139 aa). Thr322 is subject to Phosphothreonine. Residues 387-399 form a rod-like helical tail region; that stretch reads DAYFNDLSLAKAL. Phosphoserine is present on Ser394.

This sequence belongs to the intermediate filament family. Heterotetramer of two type I and two type II keratins. Interacts with PNN and the actin-binding domain of DMD.

In terms of biological role, involved in the organization of myofibers. Together with KRT8, helps to link the contractile apparatus to dystrophin at the costameres of striated muscle. The polypeptide is Keratin, type I cytoskeletal 19 (KRT19) (Bos taurus (Bovine)).